A 481-amino-acid polypeptide reads, in one-letter code: Cytochrome c oxidase subunit 1 (481 aa).

A helical transmembrane segment spans residues 22–42 (ISYLWLAYWFGMIGFYMSVLI). Residues E45 and G50 each contribute to the Ca(2+) site. The next 8 membrane-spanning stretches (helical) occupy residues 64–84 (LLFT…GLFG), 109–129 (SLLF…LEIG), 151–171 (FIIF…VNFI), 194–214 (IVLT…VFLM), 240–260 (LFWF…FGII), 278–298 (MILA…TSYV), 309–329 (YFTT…FNWV), and 343–363 (LVLF…TGVV). H69 serves as a coordination point for Fe(II)-heme a. Cu cation is bound at residue H246. Positions 246-250 (HPEVY) form a cross-link, 1'-histidyl-3'-tyrosine (His-Tyr). An O2-binding site is contributed by Y250. 2 residues coordinate Mg(2+): H374 and D375. H382 provides a ligand contact to heme a3. Helical transmembrane passes span 382-402 (HFHF…IIYI) and 420-440 (IAPI…FTGF). H384 lines the Fe(II)-heme a pocket. Residue P448 coordinates Ca(2+). The helical transmembrane segment at 459–479 (FICTLGATMMLVLKLAILFII) threads the bilayer.

Belongs to the heme-copper respiratory oxidase family. As to quaternary structure, component of the cytochrome c oxidase (complex IV, CIV), a multisubunit enzyme composed of a catalytic core of 3 subunits and several supernumerary subunits. The complex exists as a monomer or a dimer and forms supercomplexes (SCs) in the inner mitochondrial membrane with ubiquinol-cytochrome c oxidoreductase (cytochrome b-c1 complex, complex III, CIII). Heme is required as a cofactor. Cu cation serves as cofactor.

The protein resides in the mitochondrion inner membrane. It catalyses the reaction 4 Fe(II)-[cytochrome c] + O2 + 8 H(+)(in) = 4 Fe(III)-[cytochrome c] + 2 H2O + 4 H(+)(out). It functions in the pathway energy metabolism; oxidative phosphorylation. Functionally, component of the cytochrome c oxidase, the last enzyme in the mitochondrial electron transport chain which drives oxidative phosphorylation. The respiratory chain contains 3 multisubunit complexes succinate dehydrogenase (complex II, CII), ubiquinol-cytochrome c oxidoreductase (cytochrome b-c1 complex, complex III, CIII) and cytochrome c oxidase (complex IV, CIV), that cooperate to transfer electrons derived from NADH and succinate to molecular oxygen, creating an electrochemical gradient over the inner membrane that drives transmembrane transport and the ATP synthase. Cytochrome c oxidase is the component of the respiratory chain that catalyzes the reduction of oxygen to water. Electrons originating from reduced cytochrome c in the intermembrane space (IMS) are transferred via the dinuclear copper A center (CU(A)) of subunit 2 and heme A of subunit 1 to the active site in subunit 1, a binuclear center (BNC) formed by heme A3 and copper B (CU(B)). The BNC reduces molecular oxygen to 2 water molecules using 4 electrons from cytochrome c in the IMS and 4 protons from the mitochondrial matrix. The polypeptide is Cytochrome c oxidase subunit 1 (MT-CO1) (Theileria parva (East coast fever infection agent)).